A 311-amino-acid polypeptide reads, in one-letter code: MSLSIIFMGTPEFSVPTLRLLVDAGHRIVAVYTQPPRPGGRRGLDLQKSPVHQAAELLGLPVFTPVNFKDPEERERFAALKADVAVVVAYGLLLPEAVLNGTRDGCYNGHASLLPRWRGAAPIQRAIMAGDAETGMMVMKMDKGLDTGAVALTRKVEIGPNMTAGELHDRLMQVGAKAMAEAMVKLEMNDLPLTPQPQDGVLYAAKIDKAETRIDFARPALDVHNHIRGLAPFPGAWFELEIGGKPERVKVLGSELAEGQGAAGELLTDDLVVACASGAVRLTRLQKAGGKPLAAADFLRGTPLAAGMRLS.

(6S)-5,6,7,8-tetrahydrofolate is bound at residue 112 to 115 (SLLP).

The protein belongs to the Fmt family.

The catalysed reaction is L-methionyl-tRNA(fMet) + (6R)-10-formyltetrahydrofolate = N-formyl-L-methionyl-tRNA(fMet) + (6S)-5,6,7,8-tetrahydrofolate + H(+). Attaches a formyl group to the free amino group of methionyl-tRNA(fMet). The formyl group appears to play a dual role in the initiator identity of N-formylmethionyl-tRNA by promoting its recognition by IF2 and preventing the misappropriation of this tRNA by the elongation apparatus. In Rhizobium leguminosarum bv. trifolii (strain WSM2304), this protein is Methionyl-tRNA formyltransferase.